Consider the following 88-residue polypeptide: Putative membrane protein insertion efficiency factor (88 aa).

The interval 68–88 (VPPKKDKNADSEHSCKVHHHH) is disordered. Residues 69–82 (PPKKDKNADSEHSC) show a composition bias toward basic and acidic residues.

This sequence belongs to the UPF0161 family.

The protein localises to the cell membrane. Functionally, could be involved in insertion of integral membrane proteins into the membrane. This Listeria monocytogenes serovar 1/2a (strain ATCC BAA-679 / EGD-e) protein is Putative membrane protein insertion efficiency factor.